Here is a 570-residue protein sequence, read N- to C-terminus: Probable D-xylulose kinase A (570 aa).

Residues His-95, Arg-166, Asp-282, and Asn-283 each contribute to the substrate site. Residues Trp-364, 469–470, and Asn-473 each bind ATP; that span reads GG.

This sequence belongs to the FGGY kinase family.

It is found in the cytoplasm. It carries out the reaction D-xylulose + ATP = D-xylulose 5-phosphate + ADP + H(+). Its function is as follows. Highly specific D-xylulose kinase which participates in the catabolism of xylose. Xylose is a major component of hemicelluloses such as xylan. Most fungi utilize D-xylose via three enzymatic reactions, xylose reductase (XR), xylitol dehydrogenase (XDH), and xylulokinase, to form xylulose 5-phosphate, which enters pentose phosphate pathway. In Aspergillus niger (strain ATCC MYA-4892 / CBS 513.88 / FGSC A1513), this protein is Probable D-xylulose kinase A (xkiA).